We begin with the raw amino-acid sequence, 1470 residues long: Transient receptor potential cation channel subfamily M member 2 (1470 aa).

Residues 1 to 725 (MDEAALEPTL…GELSVDNPHW (725 aa)) lie on the Cytoplasmic side of the membrane. Residues Y267, R274, 305–308 (GPGT), and R330 each bind ADP-D-ribose. The stretch at 726 to 738 (KVLLCMIFFPLIY) is an intramembrane region. At 739–808 (TGFLTFRRDE…MSFLKSPQVK (70 aa)) the chain is on the cytoplasmic side. The chain crosses the membrane as a helical span at residues 809-829 (FYWNIASYFGFLWLFAVVLMI). The Extracellular segment spans residues 830–836 (DFQTSPS). Residues 837–857 (WRELLLYVWLTSLVCEEIRQL) form a helical membrane-spanning segment. Residues E853 and Q856 each contribute to the Ca(2+) site. Over 858–876 (YHDFDGSGFRRKAKMYIKD) the chain is Cytoplasmic. A helical membrane pass occupies residues 877–897 (LWNILDVLSIVLFIAGLICRL). N879 contributes to the Ca(2+) binding site. The Extracellular portion of the chain corresponds to 898–905 (QASDTVFY). Residues 906-926 (IGKVILCIDFIIFCLRLMAIF) form a helical membrane-spanning segment. Residues 927–941 (SISRTLGPKIIIVRR) lie on the Cytoplasmic side of the membrane. Residues 942–968 (MMLDLFFFMFLLSIWVVAYGVAKQGIL) traverse the membrane as a helical segment. Over 969–977 (IENEERLNW) the chain is Extracellular. The pore-forming intramembrane region spans 978-1002 (IIRGAVYEPYITIFGNFPTNIDNTL). The short motif at 991 to 993 (FGN) is the Selectivity filter element. Topologically, residues 1003–1034 (FDISSCSVNASDPLKPKCPMLNADNTPVFPEW) are extracellular. Cysteines 1008 and 1020 form a disulfide. N-linked (GlcNAc...) asparagine glycosylation is present at N1011. A helical membrane pass occupies residues 1035–1059 (LTIMMLCVYLLFANILLLNLLIAIF). Residues 1060-1087 (NYTFQEVQDNTDTIWKFQRYELIKEYHS) lie on the Cytoplasmic side of the membrane. Ca(2+) is bound at residue E1084. The stretch at 1088–1105 (RPALPPPFILLSHLILFI) is an intramembrane region. Topologically, residues 1106-1470 (RGVFLRDLPQ…QIAHHHNTYF (365 aa)) are cytoplasmic. The divergent Nudix hydrolase-like domain stretch occupies residues 1157-1470 (HRIHDTAEKV…QIAHHHNTYF (314 aa)). Disordered regions lie at residues 1215–1256 (KSKV…LQYP) and 1281–1314 (PPVYNQQDSSESDTSALDKHRNPGGRTGIRGKGA). Acidic residues predominate over residues 1231–1244 (DDGDSSGQETDDEE). Over residues 1283–1295 (VYNQQDSSESDTS) the composition is skewed to polar residues. D1398 and R1400 together coordinate ADP-D-ribose.

This sequence belongs to the transient receptor (TC 1.A.4) family. LTrpC subfamily. TRPM2 sub-subfamily. As to quaternary structure, homotetramer.

It localises to the cell membrane. The catalysed reaction is Ca(2+)(in) = Ca(2+)(out). It catalyses the reaction Na(+)(in) = Na(+)(out). Activated by intracellular ADP-ribose. Ca(2+) and PI(4,5)P2 are required for channel opening by ADP-ribose. Functionally, nonselective, voltage-independent cation channel that mediates Ca(2+) influx, leading to increased cytoplasmic Ca(2+) levels. Functions as a ligand-gated ion channel, gated by intracellular adenosine diphosphate ribose (ADP-ribose), Ca(2+), warm temperature, and oxidative stress. Binding of ADP-ribose to the cytoplasmic N-terminal region causes a conformation change; the channel is primed but still requires Ca(2+) binding to trigger channel opening. The protein is Transient receptor potential cation channel subfamily M member 2 of Danio rerio (Zebrafish).